A 1590-amino-acid polypeptide reads, in one-letter code: Pentafunctional AROM polypeptide (1590 aa).

Positions 1–400 (MSTANGSSPT…HEPKASSVDD (400 aa)) are 3-dehydroquinate synthase. NAD(+) is bound by residues 49 to 51 (DTN), 96 to 99 (EGSK), 127 to 129 (GGV), and Asp132. Residue Arg143 coordinates 7-phospho-2-dehydro-3-deoxy-D-arabino-heptonate. Residue 152 to 153 (TT) participates in NAD(+) binding. 7-phospho-2-dehydro-3-deoxy-D-arabino-heptonate-binding residues include Asp159 and Lys165. Lys174 contacts NAD(+). Residue Asn175 participates in 7-phospho-2-dehydro-3-deoxy-D-arabino-heptonate binding. NAD(+)-binding positions include 192 to 195 (FLNT) and Asn203. Glu207 provides a ligand contact to Zn(2+). Residues 207–210 (EVIK) and Lys266 each bind 7-phospho-2-dehydro-3-deoxy-D-arabino-heptonate. Glu276 serves as the catalytic Proton acceptor; for 3-dehydroquinate synthase activity. 7-phospho-2-dehydro-3-deoxy-D-arabino-heptonate-binding positions include 280-284 (RNLLN) and His287. His287 is a binding site for Zn(2+). The active-site Proton acceptor; for 3-dehydroquinate synthase activity is the His291. Residues His303 and Lys372 each coordinate 7-phospho-2-dehydro-3-deoxy-D-arabino-heptonate. His303 provides a ligand contact to Zn(2+). The tract at residues 413-856 (VQPGVRPGLK…WDVLSGVFGV (444 aa)) is EPSP synthase. Residue Cys838 is the For EPSP synthase activity of the active site. Positions 876 to 1070 (NRSVFVIGMR…KAKPHSFFVS (195 aa)) are shikimate kinase. 883-890 (GMRGAGKS) provides a ligand contact to ATP. Residues 1071-1285 (LTVPNITAHT…AAPGQLTAAE (215 aa)) are 3-dehydroquinase. His1187 (proton acceptor; for 3-dehydroquinate dehydratase activity) is an active-site residue. Lys1215 functions as the Schiff-base intermediate with substrate; for 3-dehydroquinate dehydratase activity in the catalytic mechanism. Positions 1298–1590 (KRKFYLFGKP…IVMNGTSDSS (293 aa)) are shikimate dehydrogenase.

In the N-terminal section; belongs to the sugar phosphate cyclases superfamily. Dehydroquinate synthase family. The protein in the 2nd section; belongs to the EPSP synthase family. This sequence in the 3rd section; belongs to the shikimate kinase family. It in the 4th section; belongs to the type-I 3-dehydroquinase family. In the C-terminal section; belongs to the shikimate dehydrogenase family. In terms of assembly, homodimer. Zn(2+) is required as a cofactor.

It is found in the cytoplasm. The catalysed reaction is 7-phospho-2-dehydro-3-deoxy-D-arabino-heptonate = 3-dehydroquinate + phosphate. It catalyses the reaction 3-dehydroquinate = 3-dehydroshikimate + H2O. The enzyme catalyses shikimate + NADP(+) = 3-dehydroshikimate + NADPH + H(+). It carries out the reaction shikimate + ATP = 3-phosphoshikimate + ADP + H(+). The catalysed reaction is 3-phosphoshikimate + phosphoenolpyruvate = 5-O-(1-carboxyvinyl)-3-phosphoshikimate + phosphate. It functions in the pathway metabolic intermediate biosynthesis; chorismate biosynthesis; chorismate from D-erythrose 4-phosphate and phosphoenolpyruvate: step 2/7. The protein operates within metabolic intermediate biosynthesis; chorismate biosynthesis; chorismate from D-erythrose 4-phosphate and phosphoenolpyruvate: step 3/7. It participates in metabolic intermediate biosynthesis; chorismate biosynthesis; chorismate from D-erythrose 4-phosphate and phosphoenolpyruvate: step 4/7. Its pathway is metabolic intermediate biosynthesis; chorismate biosynthesis; chorismate from D-erythrose 4-phosphate and phosphoenolpyruvate: step 5/7. It functions in the pathway metabolic intermediate biosynthesis; chorismate biosynthesis; chorismate from D-erythrose 4-phosphate and phosphoenolpyruvate: step 6/7. Its function is as follows. The AROM polypeptide catalyzes 5 consecutive enzymatic reactions in prechorismate polyaromatic amino acid biosynthesis. The chain is Pentafunctional AROM polypeptide from Pyricularia oryzae (strain 70-15 / ATCC MYA-4617 / FGSC 8958) (Rice blast fungus).